Reading from the N-terminus, the 58-residue chain is MSVVALGATSITPPHGPESQGRPFPARGPVRPSARARPVPLWTYGYSEGTSRAGRRWG.

The interval 1-37 (MSVVALGATSITPPHGPESQGRPFPARGPVRPSARAR) is disordered. The segment covering 25-37 (PARGPVRPSARAR) has biased composition (low complexity).

In Streptomyces hygroscopicus, this protein is Curromycin resistance protein (cre).